A 521-amino-acid chain; its full sequence is Protein nucleotidyltransferase YdiU (521 aa).

The ATP site is built by glycine 109, glycine 111, arginine 112, lysine 131, aspartate 143, glycine 144, arginine 194, and arginine 201. The active-site Proton acceptor is aspartate 270. 2 residues coordinate Mg(2+): asparagine 271 and aspartate 280. Aspartate 280 contacts ATP.

Belongs to the SELO family. Mg(2+) serves as cofactor. The cofactor is Mn(2+).

The enzyme catalyses L-seryl-[protein] + ATP = 3-O-(5'-adenylyl)-L-seryl-[protein] + diphosphate. The catalysed reaction is L-threonyl-[protein] + ATP = 3-O-(5'-adenylyl)-L-threonyl-[protein] + diphosphate. It carries out the reaction L-tyrosyl-[protein] + ATP = O-(5'-adenylyl)-L-tyrosyl-[protein] + diphosphate. It catalyses the reaction L-histidyl-[protein] + UTP = N(tele)-(5'-uridylyl)-L-histidyl-[protein] + diphosphate. The enzyme catalyses L-seryl-[protein] + UTP = O-(5'-uridylyl)-L-seryl-[protein] + diphosphate. The catalysed reaction is L-tyrosyl-[protein] + UTP = O-(5'-uridylyl)-L-tyrosyl-[protein] + diphosphate. Nucleotidyltransferase involved in the post-translational modification of proteins. It can catalyze the addition of adenosine monophosphate (AMP) or uridine monophosphate (UMP) to a protein, resulting in modifications known as AMPylation and UMPylation. The protein is Protein nucleotidyltransferase YdiU of Burkholderia pseudomallei (strain K96243).